The sequence spans 529 residues: AT hook-containing protein attf-4 (529 aa).

Disordered regions lie at residues 1–39 (MLQP…MEDD), 131–158 (QVVH…KPIE), 173–200 (GGGG…FPPP), and 233–255 (VSAN…DHLE). Composition is skewed to polar residues over residues 19–31 (SVST…SPSN) and 138–153 (QNGS…TSEN). Residues 179–189 (IHTERLSEPAR) are compositionally biased toward basic and acidic residues. Residues 233 to 248 (VSANTSTASPGPSSEG) show a composition bias toward low complexity. The a.T hook DNA-binding region spans 307-319 (GRGRGRPKLIGDE). The interval 436-476 (LEGGSPPASSSSTATTSTATKTVKQESKNGHQNEENLNVKQ) is disordered. Positions 443–455 (ASSSSTATTSTAT) are enriched in low complexity. Over residues 458-469 (VKQESKNGHQNE) the composition is skewed to basic and acidic residues.

This is AT hook-containing protein attf-4 from Caenorhabditis elegans.